Reading from the N-terminus, the 362-residue chain is 3-dehydroquinate synthase (362 aa).

NAD(+) is bound by residues 71 to 76, 105 to 109, 129 to 130, lysine 142, and lysine 151; these read DGEQNK, GVIGD, and TT. 3 residues coordinate Zn(2+): glutamate 184, histidine 247, and histidine 264.

The protein belongs to the sugar phosphate cyclases superfamily. Dehydroquinate synthase family. Co(2+) serves as cofactor. It depends on Zn(2+) as a cofactor. The cofactor is NAD(+).

The protein localises to the cytoplasm. It catalyses the reaction 7-phospho-2-dehydro-3-deoxy-D-arabino-heptonate = 3-dehydroquinate + phosphate. It functions in the pathway metabolic intermediate biosynthesis; chorismate biosynthesis; chorismate from D-erythrose 4-phosphate and phosphoenolpyruvate: step 2/7. Functionally, catalyzes the conversion of 3-deoxy-D-arabino-heptulosonate 7-phosphate (DAHP) to dehydroquinate (DHQ). The protein is 3-dehydroquinate synthase of Blochmanniella pennsylvanica (strain BPEN).